Here is a 611-residue protein sequence, read N- to C-terminus: Guanylate-binding protein 6 (611 aa).

Residues 1–308 (MTQPQMAPIC…NAINSGAVPC (308 aa)) form a GTPase domain (Globular) region. Residues 33–275 (SQPVVVVAIV…FVSYIFTYAK (243 aa)) enclose the GB1/RHD3-type G domain. Residues 43–50 (GLYRTGKS), 65–67 (LGS), and 95–99 (DTEGL) each bind GTP.

It belongs to the TRAFAC class dynamin-like GTPase superfamily. GB1/RHD3 GTPase family. GB1 subfamily.

It is found in the cytoplasmic vesicle. It catalyses the reaction GTP + H2O = GDP + phosphate + H(+). In terms of biological role, interferon (IFN)-inducible GTPase that plays important roles in innate immunity against a diverse range of bacterial, viral and protozoan pathogens, such as bacterial pathogens Listeria monocytogenes and Mycobacterium bovis BCG as well as the protozoan pathogen Toxoplasma gondii. Confers protection to several pathogens, including the bacterial pathogens Listeria monocytogenes and Mycobacterium bovis BCG as well as the protozoan pathogen Toxoplasma gondii. The chain is Guanylate-binding protein 6 (Gbp6) from Mus musculus (Mouse).